Here is a 485-residue protein sequence, read N- to C-terminus: NADH-quinone oxidoreductase subunit N (485 aa).

Helical transmembrane passes span 8–28, 35–55, 71–91, 105–125, 127–147, 159–179, 203–223, 235–255, 271–291, 297–317, 326–346, 373–393, 408–430, and 455–475; these read LIAL…MLSI, FLNA…LWFV, GFAM…CTFA, FYLL…ANHL, ALFL…GYAF, YTIL…LVYA, LLAG…LVPF, PAPV…GVVM, VVLG…ALSQ, LLGY…IALQ, VGVY…VVSL, AAVM…LGFI, WWLV…RVAV, and IVVL…QPLI.

It belongs to the complex I subunit 2 family. In terms of assembly, NDH-1 is composed of 13 different subunits. Subunits NuoA, H, J, K, L, M, N constitute the membrane sector of the complex.

It is found in the cell inner membrane. It catalyses the reaction a quinone + NADH + 5 H(+)(in) = a quinol + NAD(+) + 4 H(+)(out). Its function is as follows. NDH-1 shuttles electrons from NADH, via FMN and iron-sulfur (Fe-S) centers, to quinones in the respiratory chain. The immediate electron acceptor for the enzyme in this species is believed to be ubiquinone. Couples the redox reaction to proton translocation (for every two electrons transferred, four hydrogen ions are translocated across the cytoplasmic membrane), and thus conserves the redox energy in a proton gradient. This chain is NADH-quinone oxidoreductase subunit N, found in Salmonella schwarzengrund (strain CVM19633).